The following is a 1420-amino-acid chain: tRNA (32-2'-O)-methyltransferase regulator TRM732 (1420 aa).

The tract at residues 748–754 (RRSGGLP) is required for activity.

It belongs to the THADA family. As to quaternary structure, interacts with TRM7; for 2'-O-methylation of position 32 in substrate tRNAs.

Its subcellular location is the cytoplasm. In terms of biological role, together with methyltransferase TRM7, methylates the 2'-O-ribose of nucleotides at position 32 of the anticodon loop of substrate tRNAs. The protein is tRNA (32-2'-O)-methyltransferase regulator TRM732 (TRM732) of Saccharomyces cerevisiae (strain ATCC 204508 / S288c) (Baker's yeast).